A 189-amino-acid polypeptide reads, in one-letter code: Probable chorismate pyruvate-lyase (189 aa).

3 residues coordinate substrate: Arg74, Leu113, and Glu175.

This sequence belongs to the UbiC family.

It localises to the cytoplasm. The catalysed reaction is chorismate = 4-hydroxybenzoate + pyruvate. Its pathway is cofactor biosynthesis; ubiquinone biosynthesis. Removes the pyruvyl group from chorismate, with concomitant aromatization of the ring, to provide 4-hydroxybenzoate (4HB) for the ubiquinone pathway. In Azoarcus sp. (strain BH72), this protein is Probable chorismate pyruvate-lyase.